A 305-amino-acid chain; its full sequence is tRNA uridine(34) hydroxylase (305 aa).

The Rhodanese domain occupies 124–219 (QDEETLVVDT…YLETIPKEES (96 aa)). Cys179 serves as the catalytic Cysteine persulfide intermediate.

Belongs to the TrhO family.

It carries out the reaction uridine(34) in tRNA + AH2 + O2 = 5-hydroxyuridine(34) in tRNA + A + H2O. Functionally, catalyzes oxygen-dependent 5-hydroxyuridine (ho5U) modification at position 34 in tRNAs. This Bartonella bacilliformis (strain ATCC 35685 / KC583 / Herrer 020/F12,63) protein is tRNA uridine(34) hydroxylase.